Reading from the N-terminus, the 359-residue chain is (2E,6E)-farnesyl diphosphate synthase (359 aa).

Positions M1–R21 are disordered. Isopentenyl diphosphate contacts are provided by K73, R76, and H105. D112 and D116 together coordinate Mg(2+). Residues D112–D116 carry the DDXXD motif motif. A (2E)-geranyl diphosphate-binding site is contributed by R121. Isopentenyl diphosphate is bound at residue R122. K201, T202, and Q239 together coordinate (2E)-geranyl diphosphate. The short motif at D242–G246 is the DDXXD motif element. (2E)-geranyl diphosphate-binding residues include K256 and K266.

Belongs to the FPP/GGPP synthase family. Requires Mg(2+) as cofactor.

The protein localises to the cytoplasm. It catalyses the reaction isopentenyl diphosphate + (2E)-geranyl diphosphate = (2E,6E)-farnesyl diphosphate + diphosphate. It functions in the pathway isoprenoid biosynthesis; farnesyl diphosphate biosynthesis; farnesyl diphosphate from geranyl diphosphate and isopentenyl diphosphate. Its function is as follows. Catalyzes the condensation of isopentenyl pyrophosphate (IPP) with geranyl diphosphate (GPP) to yield (2E,6E)-farnesyl diphosphate (E,E-FPP). May be used for squalene and possibly sterol biosynthesis. The polypeptide is (2E,6E)-farnesyl diphosphate synthase (Mycobacterium bovis (strain ATCC BAA-935 / AF2122/97)).